The chain runs to 381 residues: Peptidoglycan transport system permease protein YejE (381 aa).

5 helical membrane passes run 38-58 (YWSF…EFIA), 183-203 (VLFG…AGAI), 230-250 (ILLI…GIML), 292-312 (LLPN…SGSI), and 347-367 (WLGL…IFVG). Residues 179-371 (FRISVLFGLT…LLIFVGEAVR (193 aa)) enclose the ABC transmembrane type-1 domain.

This sequence belongs to the binding-protein-dependent transport system permease family. In terms of assembly, the complex is composed of one ATP-binding protein (YejF), two transmembrane proteins (YejB and YejE) and a solute-binding protein (YepA or YejA).

It localises to the cell inner membrane. Part of the ABC transporter complex YejBEF-YepA involved in the uptake of muropeptides, the breakdown products of cell wall peptidoglycan. The import of muropeptides into the cell enables peptidoglycan recycling, which is vital for cell wall integrity in this bacterium. Is also probably part of the ABC transporter complex YejABEF, which is likely involved in broad-spectrum peptide import. Responsible for the translocation of the substrate across the membrane. The sequence is that of Peptidoglycan transport system permease protein YejE from Agrobacterium fabrum (strain C58 / ATCC 33970) (Agrobacterium tumefaciens (strain C58)).